Here is a 614-residue protein sequence, read N- to C-terminus: 1-deoxy-D-xylulose-5-phosphate synthase (614 aa).

Thiamine diphosphate-binding positions include His-74 and 115–117 (AHS). Residue Asp-146 participates in Mg(2+) binding. Residues 147–148 (GA), Asn-175, Tyr-282, and Glu-363 each bind thiamine diphosphate. Asn-175 is a Mg(2+) binding site.

The protein belongs to the transketolase family. DXPS subfamily. In terms of assembly, homodimer. The cofactor is Mg(2+). It depends on thiamine diphosphate as a cofactor.

The enzyme catalyses D-glyceraldehyde 3-phosphate + pyruvate + H(+) = 1-deoxy-D-xylulose 5-phosphate + CO2. It functions in the pathway metabolic intermediate biosynthesis; 1-deoxy-D-xylulose 5-phosphate biosynthesis; 1-deoxy-D-xylulose 5-phosphate from D-glyceraldehyde 3-phosphate and pyruvate: step 1/1. Functionally, catalyzes the acyloin condensation reaction between C atoms 2 and 3 of pyruvate and glyceraldehyde 3-phosphate to yield 1-deoxy-D-xylulose-5-phosphate (DXP). This chain is 1-deoxy-D-xylulose-5-phosphate synthase, found in Nitrosospira multiformis (strain ATCC 25196 / NCIMB 11849 / C 71).